A 247-amino-acid polypeptide reads, in one-letter code: SPX domain-containing protein 5 (247 aa).

The SPX domain maps to 1 to 139 (MKFGKRLKRQ…GGVLRLPVIA (139 aa)). Positions 224-247 (SDWLIQSVQPPPPPPPSSPLIIPT) are disordered. Positions 232–241 (QPPPPPPPSS) are enriched in pro residues.

The polypeptide is SPX domain-containing protein 5 (SPX5) (Oryza sativa subsp. indica (Rice)).